A 757-amino-acid polypeptide reads, in one-letter code: MDVNPTLLFLKVPAQNAISTTFPYTGDPPYSHGTGTGYTMDTVNRTHQYSERGRWTKNTETGAPQLNPIDGPLPEDNEPSGYAQTDCVLEAMAFLEESHPGIFENSCIETMEVVQQTRVDKLTQGRQTYDWTLNRNQPAATALANTIEVFRSNGLMANESGRLIDFLKDVMESMDKEEMEVTTHFQRKRRVRDNVTKKMVTQRTIGKKKQRLNKRSYLIRALTLNTMTKDAERGKLKRRAIATPGMQIRGFVYFVETLARSICEKLEQSGLPVGGNEKKAKLANVVRKMMTNSQDTEISFTITGDNTKWNENQNPRMFLAMITYITRNQPEWFRNILSIAPIMFSNKMARLGKGYMFESKSMKLRTQIPAEMIANIDLKYFNDSTRKKIEKIRPLLIDGTASLSPGMMMGMFNMLSTVLGVSILNLGQKRYTKTTYWWDGLQSSDDFALIVNAPNHAGIQAGVDRFYRTCKLLGINMSKKKSYINRTGTFEFTSFFYRYGFVANFSMELPSFGVSGINESADMSIGVTVIKNNMINNDLGPATAQMALQLFIKDYRYTYRCHRGDTQIQTRRSFEIKKLWEQTRSKAGLLVSDGGPNLYNIRNLHIPEVCLKWELMDEDYQGRLCNPLNPFVSHKEIESVNNAVMMPAHGPAKNMEYDAVATTHSWVPKRNRSILNTSQRGILEDEQMYQRCCNLFEKFFPSSSYRRPVGISSMVEAMVSRARIDARIDFESGRIKKEDFTEIMKICSTIEELRRQK.

Residues 50–82 form a disordered region; the sequence is SERGRWTKNTETGAPQLNPIDGPLPEDNEPSGY. Short sequence motifs (nuclear localization signal) lie at residues 187 to 195 and 203 to 216; these read RKRRVRDNV and RTIG…NKRS. Residues 249-256 are promoter-binding site; that stretch reads RGFVYFVE. The 198-residue stretch at 286–483 folds into the RdRp catalytic domain; that stretch reads VRKMMTNSQD…GINMSKKKSY (198 aa).

This sequence belongs to the influenza viruses polymerase PB1 family. In terms of assembly, influenza RNA polymerase is composed of three subunits: PB1, PB2 and PA. Interacts (via N-terminus) with PA (via C-terminus). Interacts (via C-terminus) with PB2 (via N-terminus); this interaction is essential for transcription initiation. Interacts (via C-terminus) with human PKP2 (via N-terminus); the interaction competitively inhibits the interaction between the RNA polymerase subunits PB1 and PB2. Phosphorylated by host PRKCA.

The protein resides in the host nucleus. The protein localises to the host cytoplasm. It catalyses the reaction RNA(n) + a ribonucleoside 5'-triphosphate = RNA(n+1) + diphosphate. RNA-dependent RNA polymerase which is responsible for replication and transcription of virus RNA segments. The transcription of viral mRNAs occurs by a unique mechanism called cap-snatching. 5' methylated caps of cellular mRNAs are cleaved after 10-13 nucleotides by PA. In turn, these short capped RNAs are used as primers by PB1 for transcription of viral mRNAs. During virus replication, PB1 initiates RNA synthesis and copy vRNA into complementary RNA (cRNA) which in turn serves as a template for the production of more vRNAs. The sequence is that of RNA-directed RNA polymerase catalytic subunit from Influenza A virus (strain A/USA:Albany/12/1951 H1N1).